Here is a 421-residue protein sequence, read N- to C-terminus: E3 ubiquitin protein ligase DRIP1 (421 aa).

The segment at 16–57 adopts an RING-type zinc-finger fold; that stretch reads CSICDNILRDATTISECLHTFCRKCIYEKITEDEIETCPVCN. Polar residues-rich tracts occupy residues 106–121 and 157–172; these read ISSL…AQAG and ESTS…TQNK. 2 disordered regions span residues 106 to 198 and 216 to 307; these read ISSL…WDSK and PLKS…QERR. A compositionally biased stretch (basic and acidic residues) spans 178-198; sequence SCKESISNKENKDGDEPWDSK. The span at 218–227 shows a compositional bias: low complexity; the sequence is KSSASQGSGS. Positions 244 to 253 are enriched in basic residues; sequence TKTKNKKRKC. Residues 262–271 are compositionally biased toward polar residues; the sequence is NGDPTTSETV. Basic residues predominate over residues 274-284; the sequence is KRMRTTQRKRS. Residues 285–294 show a composition bias toward polar residues; sequence ATTLGDSRNL.

In terms of assembly, interacts with DREB2A. Autoubiquitinated. As to expression, expressed in roots, leaves and flowers.

It is found in the nucleus. The enzyme catalyses S-ubiquitinyl-[E2 ubiquitin-conjugating enzyme]-L-cysteine + [acceptor protein]-L-lysine = [E2 ubiquitin-conjugating enzyme]-L-cysteine + N(6)-ubiquitinyl-[acceptor protein]-L-lysine.. The protein operates within protein modification; protein ubiquitination. E3 ubiquitin-protein ligase that acts as a negative regulator of the response to water stress. Mediates ubiquitination and subsequent proteasomal degradation of the drought-induced transcriptional activator DREB2A. Functionally redundant with DRIP2. The polypeptide is E3 ubiquitin protein ligase DRIP1 (DRIP1) (Arabidopsis thaliana (Mouse-ear cress)).